The sequence spans 96 residues: Cytoplasmic envelopment protein 3 (96 aa).

Glycine 2 carries the N-myristoyl glycine; by host lipid modification. Positions 18–19 match the Di-leucine-like internalization motif motif; it reads LI. Residues 37 to 43 form an asp/Glu-rich (acidic) region; that stretch reads DIESEEE. A Phosphoserine modification is found at serine 40. The segment at 44–96 is disordered; it reads GNFYVPPDMRGVTRAPGRQRLRSSDPPSRHTHRRTPGGACPATQFPPPMSDSE. Positions 87-96 are enriched in pro residues; the sequence is QFPPPMSDSE.

Belongs to the herpesviridae cytoplasmic envelopment protein 3 family. In terms of assembly, interacts with cytoplasmic envelopment protein 2; this interaction is essential for the proper localization of each protein to the assembly complex and thus for the production of infectious virus. Interacts with gE (via C-terminus). Interacts with gD (via C-terminus). Interacts with UL56. Myristoylation and palmitoylation (probably on one or more of the nearby cysteines at the N-terminus) enable membrane-binding and Golgi apparatus-specific targeting and are essential for efficient packaging. In terms of processing, phosphorylated. Phosphorylation does not seem to be required for recycling to the host Golgi apparatus. Packaging is selective for underphosphorylated forms.

The protein localises to the virion tegument. It is found in the virion membrane. The protein resides in the host cell membrane. It localises to the host Golgi apparatus membrane. Its function is as follows. Plays an important role in the cytoplasmic envelopment of tegument proteins and capsids during the assembly and egress processes. Also participates in viral entry at the fusion step probably by regulating the core fusion machinery. The chain is Cytoplasmic envelopment protein 3 from Homo sapiens (Human).